The chain runs to 119 residues: MARVKRGVQARRRHKKILSLAKGYYNARRKVFRVAKQAVIKAQQYAYIGRKQKKRNFRSLWIVRINAAARINGLSYSRFMNGLLKCGITLDRKVLADIAVHDPAGFTALAEKAKSILAA.

It belongs to the bacterial ribosomal protein bL20 family.

Functionally, binds directly to 23S ribosomal RNA and is necessary for the in vitro assembly process of the 50S ribosomal subunit. It is not involved in the protein synthesizing functions of that subunit. The chain is Large ribosomal subunit protein bL20 from Xylella fastidiosa (strain 9a5c).